The sequence spans 640 residues: 1,4-alpha-glucan branching enzyme GlgB (640 aa).

The active-site Nucleophile is the aspartate 317. The Proton donor role is filled by glutamate 370.

This sequence belongs to the glycosyl hydrolase 13 family. GlgB subfamily. In terms of assembly, monomer.

The catalysed reaction is Transfers a segment of a (1-&gt;4)-alpha-D-glucan chain to a primary hydroxy group in a similar glucan chain.. It participates in glycan biosynthesis; glycogen biosynthesis. Its function is as follows. Catalyzes the formation of the alpha-1,6-glucosidic linkages in glycogen by scission of a 1,4-alpha-linked oligosaccharide from growing alpha-1,4-glucan chains and the subsequent attachment of the oligosaccharide to the alpha-1,6 position. This Nitratidesulfovibrio vulgaris (strain ATCC 29579 / DSM 644 / CCUG 34227 / NCIMB 8303 / VKM B-1760 / Hildenborough) (Desulfovibrio vulgaris) protein is 1,4-alpha-glucan branching enzyme GlgB.